Here is a 398-residue protein sequence, read N- to C-terminus: Odorant receptor 59b (398 aa).

Topologically, residues 1–46 (MAVFKLIKPAPLTEKVQSRQGNIYLYRAMWLIGWIPPKEGVLRYVY) are cytoplasmic. Residues 47–67 (LFWTCVPFAFGVFYLPVGFII) traverse the membrane as a helical segment. The Extracellular portion of the chain corresponds to 68 to 84 (SYVQEFKNFTPGEFLTS). A helical transmembrane segment spans residues 85-105 (LQVCINVYGASVKSTITYLFL). Residues 106 to 141 (WRLRKTEILLDSLDKRLANDSDRERIHNMVARCNYA) are Cytoplasmic-facing. A helical membrane pass occupies residues 142–162 (FLIYSFIYCGYAGSTFLSYAL). Topologically, residues 163-179 (SGRPPWSVYNPFIDWRD) are extracellular. A helical membrane pass occupies residues 180-200 (GMGSLWIQAIFEYITMSFAVL). Over 201–269 (QDQLSDTYPL…DMIRPMISRT (69 aa)) the chain is Cytoplasmic. The helical transmembrane segment at 270 to 290 (IFVQFALIGSVLGLTLVNVFF) threads the bilayer. Residues 291–293 (FSN) lie on the Extracellular side of the membrane. The helical transmembrane segment at 294–314 (FWKGVASLLFVITILLQTFPF) threads the bilayer. At 315–348 (CYTCNMLIDDAQDLSNEIFQSNWVDAEPRYKATL) the chain is on the cytoplasmic side. The chain crosses the membrane as a helical span at residues 349–369 (VLFMHHVQQPIIFIAGGIFPI). At 370-398 (SMNSNITVAKFAFSIITIVRQMNLAEQFQ) the chain is on the extracellular side. A glycan (N-linked (GlcNAc...) asparagine) is linked at Asn-374.

Belongs to the insect chemoreceptor superfamily. Heteromeric odorant receptor channel (TC 1.A.69) family. Or2a subfamily. Interacts with Orco. Complexes exist early in the endomembrane system in olfactory sensory neurons (OSNs), coupling these complexes to the conserved ciliary trafficking pathway. In terms of tissue distribution, expressed in olfactory sensory neurons in the antenna.

It is found in the cell membrane. In terms of biological role, odorant receptor which mediates acceptance or avoidance behavior, depending on its substrates. The odorant receptor repertoire encodes a large collection of odor stimuli that vary widely in identity, intensity, and duration. Forms a complex with Orco to form odorant-sensing units, providing sensitive and prolonged odorant signaling and calcium permeability. Also plays a role in the response to N,N-Diethyl-meta-toluamide (DEET), the most widely used insect repellent worldwide. The sequence is that of Odorant receptor 59b (Or59b) from Drosophila melanogaster (Fruit fly).